The following is a 340-amino-acid chain: Cathepsin B (340 aa).

Positions 1–17 (MSWSRSILCLLGAFANA) are cleaved as a signal peptide. A propeptide spans 18 to 79 (RSIPYYPPLS…ERVDFAEDMD (62 aa)) (activation peptide). Asparagine 38 carries N-linked (GlcNAc...) asparagine glycosylation. 6 cysteine pairs are disulfide-bonded: cysteine 93-cysteine 122, cysteine 105-cysteine 150, cysteine 141-cysteine 208, cysteine 142-cysteine 146, cysteine 179-cysteine 212, and cysteine 187-cysteine 198. Residue cysteine 108 is part of the active site. Asparagine 192 is a glycosylation site (N-linked (GlcNAc...) asparagine). Active-site residues include histidine 279 and asparagine 299.

The protein belongs to the peptidase C1 family. As to quaternary structure, dimer of a heavy chain and a light chain cross-linked by a disulfide bond.

The protein localises to the lysosome. It carries out the reaction Hydrolysis of proteins with broad specificity for peptide bonds. Preferentially cleaves -Arg-Arg-|-Xaa bonds in small molecule substrates (thus differing from cathepsin L). In addition to being an endopeptidase, shows peptidyl-dipeptidase activity, liberating C-terminal dipeptides.. Functionally, thiol protease which is believed to participate in intracellular degradation and turnover of proteins. Has also been implicated in tumor invasion and metastasis. The chain is Cathepsin B (CTSB) from Gallus gallus (Chicken).